Here is a 225-residue protein sequence, read N- to C-terminus: Probable proteasome subunit beta type-6 (225 aa).

Belongs to the peptidase T1B family. In terms of assembly, the 26S proteasome consists of a 20S proteasome core and two 19S regulatory subunits. The 20S proteasome core is composed of 28 subunits that are arranged in four stacked rings, resulting in a barrel-shaped structure. The two end rings are each formed by seven alpha subunits, and the two central rings are each formed by seven beta subunits. The catalytic chamber with the active sites is on the inside of the barrel.

The protein resides in the cytoplasm. It is found in the nucleus. In terms of biological role, non-catalytic component of the proteasome, a multicatalytic proteinase complex which is characterized by its ability to cleave peptides with Arg, Phe, Tyr, Leu, and Glu adjacent to the leaving group at neutral or slightly basic pH. The proteasome has an ATP-dependent proteolytic activity. The sequence is that of Probable proteasome subunit beta type-6 (pam1) from Schizosaccharomyces pombe (strain 972 / ATCC 24843) (Fission yeast).